The chain runs to 329 residues: MHPQSVLHSGYFHPLLRNWQTAATSLSASNLIYPIFVTDVPDDKQPIASLPGVARYGVNRLEEMLKPLVEEGLRCVLIFGVPSRVPKDERGSAADSEDSPAIEAIRLLRKNFPSLLVACDVCLCPYTSHGHCGLLSENGSFQAEESRQRLAEVALAYAKAGCQVVAPSDMMDGRVEAIKEALMAHGFGNRVSVMSYSAKFASCFYGPFRDAAQSSPAFGDRRCYQLPPGARGLALRAVDRDVREGADLLMVKPGTPYLDIVREVKNKHPELPLAVYHVSGEFAMLWHGAQAGAFDLKAAVLEVMTAFRRAGADVIITYYTPQLLQWLKE.

Zn(2+)-binding residues include C122, C124, H131, and C132. K199 functions as the Schiff-base intermediate with substrate in the catalytic mechanism. Residue K199 is modified to N6-succinyllysine. R209 is a binding site for 5-aminolevulinate. At S215 the chain carries Phosphoserine. R221 lines the 5-aminolevulinate pocket. C223 is a Zn(2+) binding site. K252 (schiff-base intermediate with substrate) is an active-site residue. K252 is subject to N6-succinyllysine. The 5-aminolevulinate site is built by S279 and Y318.

This sequence belongs to the ALAD family. In terms of assembly, homooctamer; active form. Homohexamer; low activity form. Requires Zn(2+) as cofactor.

It is found in the cytoplasm. It localises to the cytosol. It catalyses the reaction 2 5-aminolevulinate = porphobilinogen + 2 H2O + H(+). The protein operates within porphyrin-containing compound metabolism; protoporphyrin-IX biosynthesis; coproporphyrinogen-III from 5-aminolevulinate: step 1/4. With respect to regulation, can alternate between a fully active homooctamer and a low-activity homohexamer. A bound magnesium ion may promote the assembly of the fully active homooctamer. The magnesium-binding site is absent in the low-activity homohexamer. Inhibited by compounds that favor the hexameric state. Inhibited by divalent lead ions. The lead ions partially displace the zinc cofactor. Its function is as follows. Catalyzes an early step in the biosynthesis of tetrapyrroles. Binds two molecules of 5-aminolevulinate per subunit, each at a distinct site, and catalyzes their condensation to form porphobilinogen. This Bos taurus (Bovine) protein is Delta-aminolevulinic acid dehydratase (ALAD).